We begin with the raw amino-acid sequence, 421 residues long: Nuclear speckle RNA-binding protein B (421 aa).

3 disordered regions span residues 1 to 64 (MDNR…VNIY), 86 to 114 (TGQT…MVDT), and 197 to 226 (TDPQ…GIPH). The span at 33-44 (PLAPPHPQPQPP) shows a compositional bias: pro residues. Residues 89–103 (TSTSTTSSSSSSSTS) are compositionally biased toward low complexity. Residues 323 to 409 (NTLYVEGLPS…KILRLQFFRN (87 aa)) enclose the RRM domain.

As to expression, isoform 1: Expressed in root meristems, lateral root primordia, root vascular tissues and cotyledon vascular tissues. Isoform 2: Expressed in root meristems, lateral root primordia and root vascular tissues.

It localises to the nucleus speckle. Functionally, alternative splicing (AS) regulator that binds to specific mRNAs and modulates auxin effects on the transcriptome. Displaced from its targets upon binding to AS competitor long non-coding RNA (ASCO-RNA). This is Nuclear speckle RNA-binding protein B from Arabidopsis thaliana (Mouse-ear cress).